Consider the following 196-residue polypeptide: Large ribosomal subunit protein eL15 (196 aa).

Composition is skewed to basic residues over residues Ala160–Arg172 and Pro186–Lys196. The tract at residues Ala160 to Lys196 is disordered.

It belongs to the eukaryotic ribosomal protein eL15 family.

This chain is Large ribosomal subunit protein eL15 (rpl15e), found in Methanosarcina mazei (strain ATCC BAA-159 / DSM 3647 / Goe1 / Go1 / JCM 11833 / OCM 88) (Methanosarcina frisia).